A 331-amino-acid chain; its full sequence is Putative lipoprotein YerB (331 aa).

An N-terminal signal peptide occupies residues 1–19 (MKKWMTVCALCFVFFLLVS). Cysteine 20 carries N-palmitoyl cysteine lipidation. Cysteine 20 carries S-diacylglycerol cysteine lipidation. Threonine 97 is modified (phosphothreonine). Serine 103 bears the Phosphoserine mark.

Interacts with PcrA. The interaction is not essential for cell viability or repair of UV-induced lesions.

Its subcellular location is the cell membrane. The sequence is that of Putative lipoprotein YerB (yerB) from Bacillus subtilis (strain 168).